The chain runs to 458 residues: Serine--tRNA ligase (458 aa).

252 to 254 (TAE) serves as a coordination point for L-serine. ATP is bound by residues 283-285 (RKE) and valine 299. Glutamate 306 serves as a coordination point for L-serine. Position 370–373 (370–373 (EMVS)) interacts with ATP. Position 405 (threonine 405) interacts with L-serine.

The protein belongs to the class-II aminoacyl-tRNA synthetase family. Type-1 seryl-tRNA synthetase subfamily. In terms of assembly, homodimer. The tRNA molecule binds across the dimer.

The protein localises to the cytoplasm. The enzyme catalyses tRNA(Ser) + L-serine + ATP = L-seryl-tRNA(Ser) + AMP + diphosphate + H(+). It catalyses the reaction tRNA(Sec) + L-serine + ATP = L-seryl-tRNA(Sec) + AMP + diphosphate + H(+). The protein operates within aminoacyl-tRNA biosynthesis; selenocysteinyl-tRNA(Sec) biosynthesis; L-seryl-tRNA(Sec) from L-serine and tRNA(Sec): step 1/1. In terms of biological role, catalyzes the attachment of serine to tRNA(Ser). Is also able to aminoacylate tRNA(Sec) with serine, to form the misacylated tRNA L-seryl-tRNA(Sec), which will be further converted into selenocysteinyl-tRNA(Sec). The protein is Serine--tRNA ligase of Sulfolobus acidocaldarius (strain ATCC 33909 / DSM 639 / JCM 8929 / NBRC 15157 / NCIMB 11770).